A 572-amino-acid polypeptide reads, in one-letter code: Hemolysin-1 (572 aa).

Its function is as follows. Bacterial hemolysins are exotoxins that attack blood cell membranes and cause cell rupture by mechanisms not clearly defined. This is Hemolysin-1 (ash1) from Aeromonas salmonicida.